Consider the following 317-residue polypeptide: Beta-ketoacyl-[acyl-carrier-protein] synthase III (317 aa).

Catalysis depends on residues Cys112 and His244. The segment at 245–249 (QANVR) is ACP-binding. Asn274 is a catalytic residue.

It belongs to the thiolase-like superfamily. FabH family. Homodimer.

It localises to the cytoplasm. The catalysed reaction is malonyl-[ACP] + acetyl-CoA + H(+) = 3-oxobutanoyl-[ACP] + CO2 + CoA. The protein operates within lipid metabolism; fatty acid biosynthesis. Its function is as follows. Catalyzes the condensation reaction of fatty acid synthesis by the addition to an acyl acceptor of two carbons from malonyl-ACP. Catalyzes the first condensation reaction which initiates fatty acid synthesis and may therefore play a role in governing the total rate of fatty acid production. Possesses both acetoacetyl-ACP synthase and acetyl transacylase activities. Its substrate specificity determines the biosynthesis of branched-chain and/or straight-chain of fatty acids. The chain is Beta-ketoacyl-[acyl-carrier-protein] synthase III from Rickettsia canadensis (strain McKiel).